A 145-amino-acid chain; its full sequence is Globin-1 (145 aa).

The region spanning 1–145 (GISADQAKAL…VIVPGMKAGY (145 aa)) is the Globin domain. Heme b-binding residues include His63 and His92.

This sequence belongs to the globin family. Monomer.

The polypeptide is Globin-1 (Liolophura japonica (Chiton)).